A 126-amino-acid chain; its full sequence is MASGGGGGGGMEAVEVRFRLDDGSDIGPSMHDQATTVTALKEFVLARWPQGKEIAPRTVNDVTIINAGQVLENNRTLAESRNLAAESPEGPITMHVVVRRSRPERRVKQPPKARPPERIGCGCTIL.

A Ubiquitin-like domain is found at 14–79 (VEVRFRLDDG…VLENNRTLAE (66 aa)). Cys123 is modified (cysteine methyl ester). Cys123 carries S-geranylgeranyl cysteine lipidation. The propeptide at 124–126 (TIL) is removed in mature form.

The protein resides in the cell membrane. Functionally, may serve as docking site to facilitate the association of other proteins to the plasma membrane. The protein is Membrane-anchored ubiquitin-fold protein 2 (MUB2) of Oryza sativa subsp. japonica (Rice).